The chain runs to 121 residues: Ubiquitin-related modifier 1 (121 aa).

Position 121 is a 1-thioglycine (glycine 121). Glycine 121 participates in a covalent cross-link: Glycyl lysine isopeptide (Gly-Lys) (interchain with K-? in acceptor proteins).

It belongs to the URM1 family. Post-translationally, C-terminal thiocarboxylation occurs in 2 steps, it is first acyl-adenylated (-COAMP) via the hesA/moeB/thiF part of UBA4, then thiocarboxylated (-COSH) via the rhodanese domain of UBA4.

The protein resides in the cytoplasm. The protein operates within tRNA modification; 5-methoxycarbonylmethyl-2-thiouridine-tRNA biosynthesis. In terms of biological role, acts as a sulfur carrier required for 2-thiolation of mcm(5)S(2)U at tRNA wobble positions of cytosolic tRNA(Lys), tRNA(Glu) and tRNA(Gln). Serves as sulfur donor in tRNA 2-thiolation reaction by being thiocarboxylated (-COSH) at its C-terminus by the MOCS3 homolog UBA4. The sulfur is then transferred to tRNA to form 2-thiolation of mcm(5)S(2)U. Prior mcm(5) tRNA modification by the elongator complex is required for 2-thiolation. Also acts as a ubiquitin-like protein (UBL) that is covalently conjugated via an isopeptide bond to lysine residues of target proteins such as AHP1. The thiocarboxylated form serves as substrate for conjugation and oxidative stress specifically induces the formation of UBL-protein conjugates. The chain is Ubiquitin-related modifier 1 from Ajellomyces capsulatus (strain NAm1 / WU24) (Darling's disease fungus).